The chain runs to 246 residues: 1-(5-phosphoribosyl)-5-[(5-phosphoribosylamino)methylideneamino] imidazole-4-carboxamide isomerase (246 aa).

Residue aspartate 8 is the Proton acceptor of the active site. The active-site Proton donor is the aspartate 130.

This sequence belongs to the HisA/HisF family.

Its subcellular location is the cytoplasm. The enzyme catalyses 1-(5-phospho-beta-D-ribosyl)-5-[(5-phospho-beta-D-ribosylamino)methylideneamino]imidazole-4-carboxamide = 5-[(5-phospho-1-deoxy-D-ribulos-1-ylimino)methylamino]-1-(5-phospho-beta-D-ribosyl)imidazole-4-carboxamide. It participates in amino-acid biosynthesis; L-histidine biosynthesis; L-histidine from 5-phospho-alpha-D-ribose 1-diphosphate: step 4/9. The protein is 1-(5-phosphoribosyl)-5-[(5-phosphoribosylamino)methylideneamino] imidazole-4-carboxamide isomerase of Halorhodospira halophila (strain DSM 244 / SL1) (Ectothiorhodospira halophila (strain DSM 244 / SL1)).